We begin with the raw amino-acid sequence, 240 residues long: Izumo sperm-egg fusion protein 3 (240 aa).

Residues 1 to 22 (MGDLWLLLLLPLSLAAFHGVKG) form the signal peptide. Residues 23-176 (CLECDPKFIE…DDPKKAESRE (154 aa)) lie on the Extracellular side of the membrane. A helical transmembrane segment spans residues 177-197 (IGLFLILLAEGVILGGVLLLF). At 198–240 (HFCISHQRKMKAIRRSLKTYLEKKLEELMGIKDEKEKDFRGRE) the chain is on the cytoplasmic side.

The protein belongs to the Izumo family. Monomer and homodimer.

The protein resides in the cell membrane. In Bos taurus (Bovine), this protein is Izumo sperm-egg fusion protein 3 (IZUMO3).